A 147-amino-acid chain; its full sequence is Hemoglobin subunit gamma (147 aa).

The region spanning 3 to 147 (HFTAEEKAII…VATALAHKYH (145 aa)) is the Globin domain. Residues H64 and H93 each contribute to the heme b site.

Belongs to the globin family. As to quaternary structure, heterotetramer of two alpha chains and two gamma chains in fetal hemoglobin (Hb F). As to expression, red blood cells.

Functionally, gamma chains make up the fetal hemoglobin F, in combination with alpha chains. This Otolemur crassicaudatus (Brown greater galago) protein is Hemoglobin subunit gamma (HBG).